Consider the following 600-residue polypeptide: Methionine--tRNA ligase (600 aa).

Positions 12–22 (PYANGPRHIGH) match the 'HIGH' region motif. Zn(2+) contacts are provided by Cys144, Cys147, Cys157, and Cys160. The 'KMSKS' region motif lies at 351-355 (KFSSS). Ser354 lines the ATP pocket.

Belongs to the class-I aminoacyl-tRNA synthetase family. MetG type 1 subfamily. As to quaternary structure, monomer. It depends on Zn(2+) as a cofactor.

Its subcellular location is the cytoplasm. The enzyme catalyses tRNA(Met) + L-methionine + ATP = L-methionyl-tRNA(Met) + AMP + diphosphate. Functionally, is required not only for elongation of protein synthesis but also for the initiation of all mRNA translation through initiator tRNA(fMet) aminoacylation. This Chloroflexus aurantiacus (strain ATCC 29364 / DSM 637 / Y-400-fl) protein is Methionine--tRNA ligase.